The primary structure comprises 145 residues: Large ribosomal subunit protein uL13 (145 aa).

It belongs to the universal ribosomal protein uL13 family. As to quaternary structure, part of the 50S ribosomal subunit.

Its function is as follows. This protein is one of the early assembly proteins of the 50S ribosomal subunit, although it is not seen to bind rRNA by itself. It is important during the early stages of 50S assembly. This Listeria monocytogenes serotype 4b (strain CLIP80459) protein is Large ribosomal subunit protein uL13.